The chain runs to 133 residues: MFDGSDLKNLFSLDGFLKTIQFEPEYIREGEISIIVPLRNNLLRIGEIMNGGAVMAISDAIGGLSAMTYPGIVNQVTVSFNTEFMRPIAKGPVRFISRVDRIGKSIAYVEVLVYDGENLLSSKSTGVYFLYRS.

Belongs to the thioesterase PaaI family.

This Thermoplasma volcanium (strain ATCC 51530 / DSM 4299 / JCM 9571 / NBRC 15438 / GSS1) protein is Putative esterase TV1331.